Reading from the N-terminus, the 580-residue chain is Alpha-thujene synthase, chloroplastic (580 aa).

A chloroplast-targeting transit peptide spans 1–32 (MALQLLTPSFSFQHSPSPHKLTTLRYTHHRIR). (2E)-geranyl diphosphate contacts are provided by R296, D333, D337, R473, and D476. Mg(2+) is bound by residues D333 and D337. Positions 333 to 337 (DDVYD) match the DDXXD motif motif. The Mg(2+) site is built by D476, T480, and E484.

It belongs to the terpene synthase family. Tpsb subfamily. Monomer. Mg(2+) is required as a cofactor. Requires Mn(2+) as cofactor. As to expression, expressed in developing and mature fruits. Barely detectable in leaves and shoots.

The protein resides in the plastid. It localises to the chloroplast. The enzyme catalyses (2E)-geranyl diphosphate = alpha-thujene + diphosphate. It participates in secondary metabolite biosynthesis; terpenoid biosynthesis. In terms of biological role, monoterpene synthase (TPS) involved in the biosynthesis of monoterpene natural products used by traditional Chinese medicine to treat headache, inflammation and intoxication. Catalyzes the conversion of (2E)-geranyl diphosphate (GPP) into alpha-thujene. This Litsea cubeba (Aromatic litsea) protein is Alpha-thujene synthase, chloroplastic.